The primary structure comprises 112 residues: Glutaredoxin-C6 (112 aa).

The Glutaredoxin domain maps to 3–103 (LAKAKETVAS…PLLTEAGAIA (101 aa)). Cys-23 and Cys-26 are joined by a disulfide.

Belongs to the glutaredoxin family. CPYC subfamily. The N-terminus is blocked. Expressed in aleurone layer.

It localises to the cytoplasm. In terms of biological role, has a glutathione-disulfide oxidoreductase activity in the presence of NADPH and glutathione reductase. Reduces low molecular weight disulfides and proteins. Possesses thioltransferase, dehydroascorbate reductase and GSH-dependent peroxidase activities in vitro. The sequence is that of Glutaredoxin-C6 (GRXC6) from Oryza sativa subsp. japonica (Rice).